Reading from the N-terminus, the 116-residue chain is UPF0122 protein CA_C1753 (116 aa).

The protein belongs to the UPF0122 family.

In terms of biological role, might take part in the signal recognition particle (SRP) pathway. This is inferred from the conservation of its genetic proximity to ftsY/ffh. May be a regulatory protein. The chain is UPF0122 protein CA_C1753 from Clostridium acetobutylicum (strain ATCC 824 / DSM 792 / JCM 1419 / IAM 19013 / LMG 5710 / NBRC 13948 / NRRL B-527 / VKM B-1787 / 2291 / W).